We begin with the raw amino-acid sequence, 276 residues long: NH(3)-dependent NAD(+) synthetase (276 aa).

43 to 50 (GISGGVDS) lines the ATP pocket. Asp-49 contacts Mg(2+). Residue Arg-146 coordinates deamido-NAD(+). Thr-166 lines the ATP pocket. Glu-171 is a binding site for Mg(2+). Deamido-NAD(+) contacts are provided by Lys-179 and Asp-186. ATP-binding residues include Lys-195 and Thr-217. 266 to 267 (HK) serves as a coordination point for deamido-NAD(+).

This sequence belongs to the NAD synthetase family. As to quaternary structure, homodimer.

The enzyme catalyses deamido-NAD(+) + NH4(+) + ATP = AMP + diphosphate + NAD(+) + H(+). It functions in the pathway cofactor biosynthesis; NAD(+) biosynthesis; NAD(+) from deamido-NAD(+) (ammonia route): step 1/1. Catalyzes the ATP-dependent amidation of deamido-NAD to form NAD. Uses ammonia as a nitrogen source. This Shewanella woodyi (strain ATCC 51908 / MS32) protein is NH(3)-dependent NAD(+) synthetase.